A 264-amino-acid polypeptide reads, in one-letter code: DNA repair protein RecO (264 aa).

Belongs to the RecO family.

Involved in DNA repair and RecF pathway recombination. This chain is DNA repair protein RecO, found in Leuconostoc citreum (strain KM20).